The sequence spans 1062 residues: MHNIQASSITLGDCLGKGAFGAVYRGLNIKNGETVAVKKVKLSKMLKSDLSVIKMEIDLLKNLDHPNIVKYRGSYQTNDSLCIILEYCENGSLRSICKNFGKIPENLVALYTFQVLQGLLYLHNQGVIHRDIKGANILTTKDGTIKLADFGVATKINALEDHSVVGSPYWMAPEVIELVGATTASDIWSVGCTVIELLDGNPPYYDLDPTSALFRMVKDEHPPLPSNISSAAKSFLMQCFQKDPNLRIKTRKLLKHPWVIMNQTSSKFSDAIDEVQKYNERVKESTLTAIIEPTSNRINPTLHSGRQSSYHMPESPKTPIAESPDHDNWDNEFQGTLKISDDVLKKSEHFMDFCSNFKGKNNSSSITSSPSKSRHAFNSDQISESNNFNASPLSTPLKAQFDPSKPALNRSIDHQKTPQHKRYLSTEFKENIPDGIEKFVETPRDSEFTDIFPTSSIKVQGLRKETGLGTLVLNKCYGSWNNEENEDGEESDIFDSIETNLENLDIENNIALDKRTHLASLLSSLLGSLRDKNIGSKDTTVSQIASILSEDLSLKREIIQAHGILPLLETLREIKTPDVQLLLLKLINTVAFDDHTTLQKVCFAGGLPLMLSFSNREHSFEFRYESAIFIQQMYRTSALTLQMFLSSNGLNSLLLFIKEDYGTNRDFVFVGVEGIWKLLRQQDYIPKNDICTMVVNDSLEPLTKAMLKALATDDDSSRMSLTRICEILLALSQADNYVKESLLCESALRRILRILLYLPHSDMAITLQFFKQLSMVPSSLSLLRKVHIIPLLTHILGDSKIEKGRKEIRSEALAALFNVCKLDKKSQEEAVISGAIPLLQEVIIKDRLFKEFALPILLALPQAGPVSRIYLWQNKCLDFFLSLLSDLNWQSAVFDTIASWLQFELREVQRVLAEKRNVQLVLKVFCISQSASSNRMLDTLGRVCQISPRLAASYGQPIIFQKFKEKLTHKGTKPIVVLNIFQIMKSMCEASSQSVAYIAHCGLPDVVANLNQTSDSVLVKELAKDLLKYLKVPQGPINEHKSPISKPHMPPPRWQPKQPLTQ.

Residues 9–259 enclose the Protein kinase domain; that stretch reads ITLGDCLGKG…TRKLLKHPWV (251 aa). ATP contacts are provided by residues 15–23 and Lys-38; that span reads LGKGAFGAV. Catalysis depends on Asp-131, which acts as the Proton acceptor. Composition is skewed to polar residues over residues 296 to 310 and 376 to 394; these read NRIN…QSSY and AFNS…SPLS. 3 disordered regions span residues 296 to 331, 361 to 394, and 1038 to 1062; these read NRIN…NWDN, NNSS…SPLS, and NEHK…PLTQ.

The protein belongs to the protein kinase superfamily. Ser/Thr protein kinase family. CDC7 subfamily. As to quaternary structure, interacts with spg1. Seems to interact with cdc11. The cofactor is Mg(2+).

It carries out the reaction L-seryl-[protein] + ATP = O-phospho-L-seryl-[protein] + ADP + H(+). It catalyses the reaction L-threonyl-[protein] + ATP = O-phospho-L-threonyl-[protein] + ADP + H(+). In terms of biological role, protein kinase essential for cell division. Plays a key role in initiation of septum formation and cytokinesis. The polypeptide is Cell division control protein 7 (cdc7) (Schizosaccharomyces pombe (strain 972 / ATCC 24843) (Fission yeast)).